Reading from the N-terminus, the 373-residue chain is Alginate lyase (373 aa).

A signal peptide spans M1–A25. Substrate is bound by residues S66–K67, H139–T140, and Y257.

This sequence belongs to the polysaccharide lyase 5 family.

It is found in the periplasm. It catalyses the reaction Eliminative cleavage of alginate to give oligosaccharides with 4-deoxy-alpha-L-erythro-hex-4-enuronosyl groups at their non-reducing ends and beta-D-mannuronate at their reducing end.. In terms of biological role, catalyzes the depolymerization of alginate by cleaving the beta-1,4 glycosidic bond between two adjacent sugar residues via a beta-elimination mechanism. May serve to degrade mislocalized alginate that is trapped in the periplasmic space. The sequence is that of Alginate lyase from Pseudomonas fluorescens.